The primary structure comprises 101 residues: Urease subunit beta (101 aa).

Belongs to the urease beta subunit family. In terms of assembly, heterotrimer of UreA (gamma), UreB (beta) and UreC (alpha) subunits. Three heterotrimers associate to form the active enzyme.

The protein resides in the cytoplasm. It carries out the reaction urea + 2 H2O + H(+) = hydrogencarbonate + 2 NH4(+). It functions in the pathway nitrogen metabolism; urea degradation; CO(2) and NH(3) from urea (urease route): step 1/1. The chain is Urease subunit beta from Leptothrix cholodnii (strain ATCC 51168 / LMG 8142 / SP-6) (Leptothrix discophora (strain SP-6)).